The chain runs to 386 residues: Cytochrome b (386 aa).

The next 4 membrane-spanning stretches (helical) occupy residues 32-52, 76-98, 113-133, and 179-199; these read LGSL…FLAM, YLIR…AHIG, VWVI…LGYC, and FFAL…MHLM. Heme b-binding residues include His82 and His96. The heme b site is built by His183 and His197. Residue His202 participates in a ubiquinone binding. Helical transmembrane passes span 225 to 245, 289 to 309, 321 to 341, and 348 to 368; these read FVFK…LFVF, LGGV…PVTD, ISKT…QLGQ, and FIQL…FIVP.

Belongs to the cytochrome b family. Fungal cytochrome b-c1 complex contains 10 subunits; 3 respiratory subunits, 2 core proteins and 5 low-molecular weight proteins. Cytochrome b-c1 complex is a homodimer. The cofactor is heme b.

It is found in the mitochondrion inner membrane. Its function is as follows. Component of the ubiquinol-cytochrome c reductase complex (complex III or cytochrome b-c1 complex) that is part of the mitochondrial respiratory chain. The b-c1 complex mediates electron transfer from ubiquinol to cytochrome c. Contributes to the generation of a proton gradient across the mitochondrial membrane that is then used for ATP synthesis. The polypeptide is Cytochrome b (COB) (Wickerhamomyces canadensis (Yeast)).